The primary structure comprises 1220 residues: MMLSASPNTLAKSSLEEMLESLRQKDECDRPKDMPPALPSRPNSRARLPSARRSLPANFNVSSVMEDQNGSVVSVTPAVEAESERKEEGVKRKEKDLGVKRNSFGSKKMRTGLRSESPYAAEKEEEGVKISIAKVSLVENTEEHNKPESEWNNNVEYFIKKKLRVWCRVSNGQWQLGKIQSTSADTSLVMLSTANVVKVSTEELFPANPDILEGVEDLIQLSYLNEPSVLYNLRVRYLQDVIYSKAGPVLIAVNPFKNVEIYGNDVISAYQKKVMDAPHVYAVADAAYDEMMREEKNQSLIISGESGAGKTETAKFAMQYLAALGGGSCGVEYEILKTTCILEAFGNAKTSRNANSSRFGKLIEIHFSAMGKICGAKLETFLLEKSRVVQLFNGERSYHIFYELCAGASPILKERLKLKTASEYTYLSQSDCLTIAGVDDAQKFHKLLEAFDIVQIPKEHQERAFALLAAVLWLGNVSFRVTDNENHVEVVADEAVANAAMLMGCNTEELMVVLSTRKLQAGTDCIAKKLTLRQATDMRDGIAKFIYANLFDWLVEQINIALEVGKSRTGRSISILDIYGFESFKNNSFEQFCINYANERLQQHFNRHLFKLEQEEYEEDGIDWTKVEFVDNQECLDLIEKKPIGLLSLLDEESNFPKATDLTFANKLKQHLKTNSCFKGERGRAFRVNHYAGEVLYDTNGFLEKNRDPLPADLINLLSSCDCQLLKLFSTKMRGKSQKPLMLSDSTNQTVGTKFKGQLFKLMNKLENTSPHFIRCIKPNSKQLPRVYEEDLVLQQLRCCGVLEVVRISRSGYPTRLTHQEFAGRYGFLLSDKKVAQDPLSVSIAVLKQYDVHPEMYQVGYTKLYLRTGQIGIFEDRRKKVLQGIVGLQKHFRGHLSRAYFQNMRKVTLVLQSYIRGENARRLFDTEAKFHADSVSEASTDELSAVIHLQSAVRGWLARKHFNSMQRQKELRNVATKSKRKAGRRISEDKDIPLEQPQVQPTSMSDLQKRILKSEAALSQKEEENTALREQLRQFEERWSEYDIKMKSMEETWQKQMSSLQMSLAAARKSLAAESITGQAGGRQDTSISPFGYDSEDTMSTGTPGVRTPTNKFTNGNTPELRIRELNGSLNAVNHLAREFDQRRLNFDEDARAIVEVKLGPQATPNGQQQQHPEDEFRRLKLRFETWKKDYKARLRDTKARLHRVDGDKGRHRKWWGKRG.

A compositionally biased stretch (polar residues) spans Met-1–Lys-12. Disordered regions lie at residues Met-1 to Ser-54 and Gln-68 to Lys-95. A compositionally biased stretch (basic and acidic residues) spans Glu-20–Asp-33. Over residues Ser-40–Ser-54 the composition is skewed to low complexity. Residues Glu-82–Lys-95 are compositionally biased toward basic and acidic residues. A Myosin N-terminal SH3-like domain is found at Lys-160–Pro-209. The Myosin motor domain maps to Glu-213–Lys-879. ATP is bound by residues Gly-304–Thr-311 and Asn-353–Lys-361. Actin-binding regions lie at residues Leu-638–Leu-672 and Leu-759–Ser-781. 3 IQ domains span residues Val-881 to Val-910, Met-904 to Asp-933, and Glu-942 to Leu-971. Disordered stretches follow at residues Gln-968–Leu-1007 and Ser-1075–Thr-1118. Polar residues-rich tracts occupy residues Pro-997 to Asp-1006 and Thr-1098 to Thr-1118. The stretch at Ser-1003–Leu-1071 forms a coiled coil.

Belongs to the TRAFAC class myosin-kinesin ATPase superfamily. Myosin family. Plant myosin class VIII subfamily. As to quaternary structure, homodimer. Expressed in flowers, leaves and roots.

The protein localises to the cell junction. Its subcellular location is the plasmodesma. It is found in the endosome. Myosin heavy chain that is required for the cell cycle-regulated transport of various organelles and proteins for their segregation. Functions by binding with its tail domain to receptor proteins on organelles and exerting force with its N-terminal motor domain against actin filaments, thereby transporting its cargo along polarized actin cables. Involved in endocytosis via its action in endosomal trafficking. The sequence is that of Myosin-2 (VIII-2) from Arabidopsis thaliana (Mouse-ear cress).